The following is a 171-amino-acid chain: Lipoprotein signal peptidase (171 aa).

A run of 3 helical transmembrane segments spans residues 12 to 32 (WYWV…WVLA), 67 to 87 (WQRW…TVWL), and 93 to 113 (SLLK…GNLV). Active-site residues include Asp123 and Asp141. A helical membrane pass occupies residues 137–157 (FNIADSAICIGAVLIIWDAFL).

This sequence belongs to the peptidase A8 family.

It localises to the cell inner membrane. The catalysed reaction is Release of signal peptides from bacterial membrane prolipoproteins. Hydrolyzes -Xaa-Yaa-Zaa-|-(S,diacylglyceryl)Cys-, in which Xaa is hydrophobic (preferably Leu), and Yaa (Ala or Ser) and Zaa (Gly or Ala) have small, neutral side chains.. It participates in protein modification; lipoprotein biosynthesis (signal peptide cleavage). Functionally, this protein specifically catalyzes the removal of signal peptides from prolipoproteins. The sequence is that of Lipoprotein signal peptidase from Shewanella baltica (strain OS223).